The following is a 129-amino-acid chain: uncharacterized protein (129 aa).

The interval Met-1 to Arg-129 is disordered. A compositionally biased stretch (basic and acidic residues) spans Glu-18–Thr-46. Low complexity predominate over residues Ser-47–Glu-59. Over residues Leu-70–Thr-97 the composition is skewed to polar residues.

This is an uncharacterized protein from Mus musculus (Mouse).